The sequence spans 720 residues: Putative fatty acid oxidation complex trifunctional enzyme (720 aa).

Residues 1–384 (MQNEIKKVCV…SWHYGPFELL (384 aa)) are 3-hydroxyacyl-CoA dehydrogenase. Positions 453–720 (FVITTKMNSL…TIEKLQAIVG (268 aa)) are enoyl-CoA hydratase/isomerase.

The protein in the N-terminal section; belongs to the 3-hydroxyacyl-CoA dehydrogenase family. This sequence in the C-terminal section; belongs to the enoyl-CoA hydratase/isomerase family.

It carries out the reaction a (3S)-3-hydroxyacyl-CoA + NAD(+) = a 3-oxoacyl-CoA + NADH + H(+). It catalyses the reaction a (3S)-3-hydroxyacyl-CoA = a (2E)-enoyl-CoA + H2O. The enzyme catalyses a 4-saturated-(3S)-3-hydroxyacyl-CoA = a (3E)-enoyl-CoA + H2O. The catalysed reaction is a (3Z)-enoyl-CoA = a 4-saturated (2E)-enoyl-CoA. It carries out the reaction a (3E)-enoyl-CoA = a 4-saturated (2E)-enoyl-CoA. This is Putative fatty acid oxidation complex trifunctional enzyme from Rickettsia prowazekii (strain Madrid E).